Here is a 374-residue protein sequence, read N- to C-terminus: Chaperone protein DnaJ (374 aa).

One can recognise a J domain in the interval 6 to 71 (DYYAVLEVTR…QKRAAYDRFG (66 aa)). A CR-type zinc finger spans residues 130–209 (GVKKPITVPT…CHGAGTVERE (80 aa)). Cys143, Cys146, Cys161, Cys164, Cys183, Cys186, Cys197, and Cys200 together coordinate Zn(2+). CXXCXGXG motif repeat units lie at residues 143 to 150 (CESCEGTG), 161 to 168 (CPTCHGAG), 183 to 190 (CPTCHGAG), and 197 to 204 (CAACHGAG).

It belongs to the DnaJ family. In terms of assembly, homodimer. It depends on Zn(2+) as a cofactor.

It is found in the cytoplasm. Functionally, participates actively in the response to hyperosmotic and heat shock by preventing the aggregation of stress-denatured proteins and by disaggregating proteins, also in an autonomous, DnaK-independent fashion. Unfolded proteins bind initially to DnaJ; upon interaction with the DnaJ-bound protein, DnaK hydrolyzes its bound ATP, resulting in the formation of a stable complex. GrpE releases ADP from DnaK; ATP binding to DnaK triggers the release of the substrate protein, thus completing the reaction cycle. Several rounds of ATP-dependent interactions between DnaJ, DnaK and GrpE are required for fully efficient folding. Also involved, together with DnaK and GrpE, in the DNA replication of plasmids through activation of initiation proteins. The polypeptide is Chaperone protein DnaJ (Gluconacetobacter diazotrophicus (strain ATCC 49037 / DSM 5601 / CCUG 37298 / CIP 103539 / LMG 7603 / PAl5)).